The primary structure comprises 316 residues: tRNA-cytidine(32) 2-sulfurtransferase (316 aa).

The PP-loop motif motif lies at 52-57 (SGGKDS). The [4Fe-4S] cluster site is built by C127, C130, and C218.

This sequence belongs to the TtcA family. In terms of assembly, homodimer. Mg(2+) is required as a cofactor. Requires [4Fe-4S] cluster as cofactor.

It localises to the cytoplasm. It carries out the reaction cytidine(32) in tRNA + S-sulfanyl-L-cysteinyl-[cysteine desulfurase] + AH2 + ATP = 2-thiocytidine(32) in tRNA + L-cysteinyl-[cysteine desulfurase] + A + AMP + diphosphate + H(+). Its pathway is tRNA modification. Functionally, catalyzes the ATP-dependent 2-thiolation of cytidine in position 32 of tRNA, to form 2-thiocytidine (s(2)C32). The sulfur atoms are provided by the cysteine/cysteine desulfurase (IscS) system. This is tRNA-cytidine(32) 2-sulfurtransferase from Haemophilus ducreyi (strain 35000HP / ATCC 700724).